An 800-amino-acid polypeptide reads, in one-letter code: Probable inorganic carbon transporter subunit DabA (800 aa).

Residues Cys-329, Asp-331, His-488, and Cys-503 each contribute to the Zn(2+) site.

The protein belongs to the inorganic carbon transporter (TC 9.A.2) DabA family. As to quaternary structure, forms a complex with DabB. It depends on Zn(2+) as a cofactor.

It localises to the cell inner membrane. Functionally, part of an energy-coupled inorganic carbon pump. This is Probable inorganic carbon transporter subunit DabA from Roseobacter denitrificans (strain ATCC 33942 / OCh 114) (Erythrobacter sp. (strain OCh 114)).